Here is a 519-residue protein sequence, read N- to C-terminus: Maltose/maltodextrin transport system permease protein MalF (519 aa).

At 1–18 (MRKNPMDVIKKKHWWQSD) the chain is on the cytoplasmic side. Residues 19 to 41 (ALKWSVLGLLGLLVGYLVVLMYA) form a helical membrane-spanning segment. Over 42-44 (QGE) the chain is Periplasmic. The helical transmembrane segment at 45–62 (YLFAITTLILSSAGLYIF) threads the bilayer. The Cytoplasmic portion of the chain corresponds to 63-74 (ANRKAYAWRYVY). A helical membrane pass occupies residues 75 to 97 (PGMAGMGLFVLFPLVCTIAIAFT). The Periplasmic portion of the chain corresponds to 98–288 (NYSSTNQLTF…QKPFLAIFVW (191 aa)). In terms of domain architecture, ABC transmembrane type-1 spans 286–510 (FVWTVVFSLI…LLVGALAIVN (225 aa)). The helical transmembrane segment at 289–311 (TVVFSLITVFLTVAVGMVLACLV) threads the bilayer. Residues 312–323 (QWEALRGKAVYR) are Cytoplasmic-facing. Residues 324–346 (VLLILPYAVPSFISILIFKGLFN) traverse the membrane as a helical segment. At 347–374 (QSFGEINMMLSALFGVKPAWFSDPTTAR) the chain is on the periplasmic side. The helical transmembrane segment at 375–397 (TMLIIVNTWLGYPYMMILCMGLL) threads the bilayer. At 398–417 (KAIPDDLYEASAMDGAGPFQ) the chain is on the cytoplasmic side. The helical transmembrane segment at 418–440 (NFFKITLPLLIKPLTPLMIASFA) threads the bilayer. The Periplasmic portion of the chain corresponds to 441-488 (FNFNNFVLIQLLTNGGPDRLGTTTPAGYTDLLVNYTYRIAFEGGGGQD). Residues 489–511 (FGLAAAIATLIFLLVGALAIVNL) traverse the membrane as a helical segment. Topologically, residues 512-519 (KATRMKFD) are cytoplasmic.

The protein belongs to the binding-protein-dependent transport system permease family. MalFG subfamily. The complex is composed of two ATP-binding proteins (MalK), two transmembrane proteins (MalG and MalF) and a solute-binding protein (MalE).

It is found in the cell inner membrane. Part of the ABC transporter complex MalEFGK involved in maltose/maltodextrin import. Probably responsible for the translocation of the substrate across the membrane. The polypeptide is Maltose/maltodextrin transport system permease protein MalF (malF) (Escherichia coli O6:H1 (strain CFT073 / ATCC 700928 / UPEC)).